The primary structure comprises 126 residues: Large ribosomal subunit protein bL12 (126 aa).

The protein belongs to the bacterial ribosomal protein bL12 family. In terms of assembly, homodimer. Part of the ribosomal stalk of the 50S ribosomal subunit. Forms a multimeric L10(L12)X complex, where L10 forms an elongated spine to which 2 to 4 L12 dimers bind in a sequential fashion. Binds GTP-bound translation factors.

Its function is as follows. Forms part of the ribosomal stalk which helps the ribosome interact with GTP-bound translation factors. Is thus essential for accurate translation. The polypeptide is Large ribosomal subunit protein bL12 (Bordetella petrii (strain ATCC BAA-461 / DSM 12804 / CCUG 43448)).